We begin with the raw amino-acid sequence, 405 residues long: Cystathionine gamma-lyase (405 aa).

Arginine 62, tyrosine 114, and arginine 119 together coordinate substrate. An N6-(pyridoxal phosphate)lysine modification is found at lysine 212. Glutamate 339 provides a ligand contact to substrate.

Belongs to the trans-sulfuration enzymes family. As to quaternary structure, homotetramer. Interacts with CALM in a calcium-dependent manner. Pyridoxal 5'-phosphate serves as cofactor.

The protein localises to the cytoplasm. The enzyme catalyses L,L-cystathionine + H2O = 2-oxobutanoate + L-cysteine + NH4(+). The catalysed reaction is L-cysteine + H2O = hydrogen sulfide + pyruvate + NH4(+) + H(+). It catalyses the reaction L-homocysteine + H2O = 2-oxobutanoate + hydrogen sulfide + NH4(+) + H(+). It carries out the reaction L-homoserine = 2-oxobutanoate + NH4(+). The enzyme catalyses L-selenocystathionine + H2O = L-selenocysteine + 2-oxobutanoate + NH4(+). It functions in the pathway amino-acid biosynthesis; L-cysteine biosynthesis; L-cysteine from L-homocysteine and L-serine: step 2/2. Functionally, catalyzes the last step in the trans-sulfuration pathway from L-methionine to L-cysteine in a pyridoxal-5'-phosphate (PLP)-dependent manner, which consists on cleaving the L,L-cystathionine molecule into L-cysteine, ammonia and 2-oxobutanoate. Part of the L-cysteine derived from the trans-sulfuration pathway is utilized for biosynthesis of the ubiquitous antioxidant glutathione. Besides its role in the conversion of L-cystathionine into L-cysteine, it utilizes L-cysteine and L-homocysteine as substrates (at much lower rates than L,L-cystathionine) to produce hydrogen sulfide (H2S). In vitro, it converts two L-cysteine molecules into lanthionine and H2S, and two L-homocysteine molecules to homolanthionine and H2S, which can be particularly relevant under conditions of severe hyperhomocysteinemia. Lanthionine and homolanthionine are structural homologs of L,L-cystathionine that differ by the absence or presence of an extra methylene group, respectively. Acts as a cysteine-protein sulfhydrase by mediating sulfhydration of target proteins: sulfhydration consists of converting -SH groups into -SSH on specific cysteine residues of target proteins such as GAPDH, PTPN1 and NF-kappa-B subunit RELA, thereby regulating their function. By generating the gasotransmitter H2S, it participates in a number of physiological processes such as vasodilation, bone protection, and inflammation. Plays an essential role in myogenesis by contributing to the biogenesis of H2S in skeletal muscle tissue. Can also accept homoserine as substrate. Catalyzes the elimination of selenocystathionine (which can be derived from the diet) to yield selenocysteine, ammonia and 2-oxobutanoate. The sequence is that of Cystathionine gamma-lyase (CTH) from Macaca fascicularis (Crab-eating macaque).